Here is a 399-residue protein sequence, read N- to C-terminus: MAKEKFVRTKPHVNVGTIGHIDHGKTTLTAAITKYLSYKGFASFVPFEQIDKAPEEKARGITINITHVEYQSEKRHYAHIDCPGHADYIKNMITGAAQMDGAILVVAATDGPMPQTREHVLLARQVNVPAMVVFLNKVDAVDDQELVDLVEMEVRDLLTKYEFPGDEIPVIRGSALLALEANDPNDAAYKPIQELIDALDSYIPEPVREVDKPFLMAVEDVFSITGRGTVATGRIERGKIRPGDEVEIVGLSYETRKTVVTSVEMFRKELDEGLAGDNVGCLLRGIDKDEIERGQVLAAPGSITPHTTFKANVYVLKKEEGGRHTPFMKGYRPQFFIRTADVTGEITELGNNAEMVMPGDNAILTIKLIYPVAIEKGMRFAIREGGRTVGAGVVAEIVE.

The region spanning 10 to 207 is the tr-type G domain; sequence KPHVNVGTIG…ALDSYIPEPV (198 aa). Positions 19-26 are G1; it reads GHIDHGKT. A GTP-binding site is contributed by 19 to 26; sequence GHIDHGKT. T26 provides a ligand contact to Mg(2+). Positions 60–64 are G2; that stretch reads GITIN. The interval 81–84 is G3; the sequence is DCPG. GTP contacts are provided by residues 81-85 and 136-139; these read DCPGH and NKVD. Positions 136–139 are G4; sequence NKVD. The interval 174-176 is G5; it reads SAL.

The protein belongs to the TRAFAC class translation factor GTPase superfamily. Classic translation factor GTPase family. EF-Tu/EF-1A subfamily. As to quaternary structure, monomer.

Its subcellular location is the cytoplasm. It catalyses the reaction GTP + H2O = GDP + phosphate + H(+). In terms of biological role, GTP hydrolase that promotes the GTP-dependent binding of aminoacyl-tRNA to the A-site of ribosomes during protein biosynthesis. This Pseudothermotoga lettingae (strain ATCC BAA-301 / DSM 14385 / NBRC 107922 / TMO) (Thermotoga lettingae) protein is Elongation factor Tu.